A 269-amino-acid polypeptide reads, in one-letter code: Ice-binding protein (269 aa).

Positions 1-24 are cleaved as a signal peptide; the sequence is MLKINRKYAIILAIVAFSSFQTEA. Short sequence motifs (probable ice-binding motif (T/S-X-T)) lie at residues 45–47, 65–67, 128–130, 154–156, 180–182, 198–200, and 218–220; these read TVT, SAT, SAQ, TLT, SIT, and AVT. The tract at residues 240-263 is PEP C-terminal anchor; sequence VPEPDSSLAVLGSGLVSLLFAFRK. Residues 245 to 261 form a helical membrane-spanning segment; that stretch reads SSLAVLGSGLVSLLFAF.

This sequence belongs to the ice-binding protein family.

The protein localises to the cell outer membrane. Its function is as follows. A probable ice-binding protein that has ice-structuring activities in vitro. Thought not to anchor the cyanobacterium to ice surfaces, as its habitat is shallow puddles fed by glacier meltwater. The sequence is that of Ice-binding protein from Nostoc sp. (strain HG1).